The sequence spans 316 residues: Small ribosomal subunit biogenesis GTPase RsgA (316 aa).

Residues 83–248 (DQYKSKLFAA…LIDSPGFQEF (166 aa)) enclose the CP-type G domain. GTP contacts are provided by residues 131 to 134 (NKTD) and 185 to 193 (GQSGMGKST). Zn(2+)-binding residues include Cys272, Cys277, His279, and Cys285.

This sequence belongs to the TRAFAC class YlqF/YawG GTPase family. RsgA subfamily. Monomer. Associates with 30S ribosomal subunit, binds 16S rRNA. Zn(2+) serves as cofactor.

It localises to the cytoplasm. In terms of biological role, one of several proteins that assist in the late maturation steps of the functional core of the 30S ribosomal subunit. Helps release RbfA from mature subunits. May play a role in the assembly of ribosomal proteins into the subunit. Circularly permuted GTPase that catalyzes slow GTP hydrolysis, GTPase activity is stimulated by the 30S ribosomal subunit. The sequence is that of Small ribosomal subunit biogenesis GTPase RsgA from Paraburkholderia phytofirmans (strain DSM 17436 / LMG 22146 / PsJN) (Burkholderia phytofirmans).